The following is a 167-amino-acid chain: Centrin-3 (167 aa).

4 EF-hand domains span residues E25–D60, V61–E96, D98–N133, and M134–I167. Residue S135 is modified to Phosphoserine. Ca(2+) contacts are provided by D147, D149, D151, E153, and E158.

It belongs to the centrin family. In terms of assembly, monomer. Component of the nuclear pore complex (NPC)-associated TREX-2 complex (transcription and export complex 2), composed of at least GANP, 2 copies of ENY2, PCID2, SEM1/DSS1, and either centrin CETN2 or centrin CETN3. The TREX-2 complex also associates with ALYREF/ALY and with the nucleoporin NUP153. Interacts with USP49.

Its subcellular location is the cytoplasm. The protein resides in the cytoskeleton. It is found in the microtubule organizing center. The protein localises to the centrosome. It localises to the nucleus. Its subcellular location is the nucleolus. The protein resides in the nucleus envelope. It is found in the nuclear pore complex. The protein localises to the centriole. In terms of biological role, plays a fundamental role in microtubule-organizing center structure and function. Functionally, as a component of the TREX-2 complex, involved in the export of mRNAs to the cytoplasm through the nuclear pores. The sequence is that of Centrin-3 (CETN3) from Homo sapiens (Human).